Consider the following 327-residue polypeptide: GTPase Obg (327 aa).

The Obg domain occupies 1–159 (MQFIDQANII…WEVQLELKLL (159 aa)). The 168-residue stretch at 160–327 (AEVGIIGLPN…SLLSEVWKRI (168 aa)) folds into the OBG-type G domain. Residues 166 to 173 (GLPNAGKS), 191 to 195 (FTTLI), 213 to 216 (DIPG), 280 to 283 (NKME), and 309 to 311 (SSS) each bind ATP. Mg(2+) is bound by residues Ser-173 and Thr-193.

Belongs to the TRAFAC class OBG-HflX-like GTPase superfamily. OBG GTPase family. As to quaternary structure, monomer. Mg(2+) is required as a cofactor.

The protein resides in the cytoplasm. Functionally, an essential GTPase which binds GTP, GDP and possibly (p)ppGpp with moderate affinity, with high nucleotide exchange rates and a fairly low GTP hydrolysis rate. Plays a role in control of the cell cycle, stress response, ribosome biogenesis and in those bacteria that undergo differentiation, in morphogenesis control. The polypeptide is GTPase Obg (Prochlorococcus marinus (strain MIT 9301)).